The sequence spans 228 residues: Expansin-B13 (228 aa).

An N-terminal signal peptide occupies residues 1–22 (MASSSLLLASVVVAAMVSAVSC). An N-linked (GlcNAc...) asparagine glycan is attached at Asn32. The Expansin-like EG45 domain maps to 61 to 172 (SGACGYKDVD…KEKGSEEWKA (112 aa)). 2 disulfide bridges follow: Cys64-Cys92 and Cys100-Cys106. Positions 142–223 (GKDEELLKYV…GWKADSVYKS (82 aa)) constitute an Expansin-like CBD domain.

It belongs to the expansin family. Expansin B subfamily.

It localises to the secreted. The protein resides in the cell wall. It is found in the membrane. May cause loosening and extension of plant cell walls by disrupting non-covalent bonding between cellulose microfibrils and matrix glucans. No enzymatic activity has been found. May be required for rapid internodal elongation in deepwater rice during submergence. This is Expansin-B13 (EXPB13) from Oryza sativa subsp. japonica (Rice).